Here is a 127-residue protein sequence, read N- to C-terminus: Large ribosomal subunit protein bL12 (127 aa).

Belongs to the bacterial ribosomal protein bL12 family. Homodimer. Part of the ribosomal stalk of the 50S ribosomal subunit. Forms a multimeric L10(L12)X complex, where L10 forms an elongated spine to which 2 to 4 L12 dimers bind in a sequential fashion. Binds GTP-bound translation factors.

Forms part of the ribosomal stalk which helps the ribosome interact with GTP-bound translation factors. Is thus essential for accurate translation. The polypeptide is Large ribosomal subunit protein bL12 (Carboxydothermus hydrogenoformans (strain ATCC BAA-161 / DSM 6008 / Z-2901)).